Here is a 739-residue protein sequence, read N- to C-terminus: Glycine--tRNA ligase (739 aa).

The N-terminal 36 residues, 1-36 (MPSPRPVLLRGARAALLLLLPPRLLARPSLLLRRSL), are a transit peptide targeting the mitochondrion. Position 35 is a phosphoserine (Ser-35). The 57-residue stretch at 63-119 (VLAPLRLAVRQQGDLVRKLKEDKAPQVDVDKAVAELKARKRVLEAKELALQPKDDIV) folds into the WHEP-TRS domain. Lys-204 is modified (N6-acetyllysine). Glu-299 contributes to the glycine binding site. Residues 331 to 333 (RNE) and 342 to 343 (RV) contribute to the ATP site. Glu-350 is a glycine binding site. A Phosphotyrosine modification is found at Tyr-453. 457-458 (EI) is a binding site for ATP. Position 501 is an N6-acetyllysine (Lys-501). 576–578 (EPS) provides a ligand contact to glycine. Arg-583 contacts ATP. Position 700 is a phosphoserine (Ser-700). At Thr-736 the chain carries Phosphothreonine.

This sequence belongs to the class-II aminoacyl-tRNA synthetase family. Homodimer. In terms of tissue distribution, widely expressed, including in brain and spinal cord. As to expression, expressed in brain, spinal cord, muscle, heart and spleen. Expressed in brain, spinal cord, muscle, heart, spleen and liver.

Its subcellular location is the cytoplasm. The protein resides in the cell projection. It localises to the axon. It is found in the secreted. The protein localises to the extracellular exosome. Its subcellular location is the mitochondrion. The enzyme catalyses tRNA(Gly) + glycine + ATP = glycyl-tRNA(Gly) + AMP + diphosphate. It catalyses the reaction 2 ATP + H(+) = P(1),P(4)-bis(5'-adenosyl) tetraphosphate + diphosphate. Its activity is regulated as follows. Ap4A synthesis is inhibited by tRNA, via the disruption of the second ATP-binding site by direct blocking and/or by tRNA-induced conformational change. Catalyzes the ATP-dependent ligation of glycine to the 3'-end of its cognate tRNA, via the formation of an aminoacyl-adenylate intermediate (Gly-AMP). Also produces diadenosine tetraphosphate (Ap4A), a universal pleiotropic signaling molecule needed for cell regulation pathways, by direct condensation of 2 ATPs. Thereby, may play a special role in Ap4A homeostasis. This chain is Glycine--tRNA ligase, found in Homo sapiens (Human).